A 256-amino-acid polypeptide reads, in one-letter code: Probable ABC transporter ATP-binding protein spyM18_0273 (256 aa).

The region spanning 4–246 is the ABC transporter domain; the sequence is LEINNLHVSI…EKEGYAGIAQ (243 aa). ATP is bound at residue 36-43; sequence GPNGTGKS.

The protein belongs to the ABC transporter superfamily. Ycf16 family.

It is found in the cell membrane. This is Probable ABC transporter ATP-binding protein spyM18_0273 from Streptococcus pyogenes serotype M18 (strain MGAS8232).